The primary structure comprises 185 residues: Ribosome-recycling factor (185 aa).

This sequence belongs to the RRF family.

Its subcellular location is the cytoplasm. In terms of biological role, responsible for the release of ribosomes from messenger RNA at the termination of protein biosynthesis. May increase the efficiency of translation by recycling ribosomes from one round of translation to another. This chain is Ribosome-recycling factor, found in Clostridioides difficile (strain 630) (Peptoclostridium difficile).